Consider the following 75-residue polypeptide: Sec-independent protein translocase protein TatA (75 aa).

A helical membrane pass occupies residues 1 to 21 (MGMPSMPELLIVLAIVVLLFG). Positions 47–75 (DEEEEVKEITKKEEPKVEAAAEEKKSENA) are disordered. The segment covering 53 to 75 (KEITKKEEPKVEAAAEEKKSENA) has biased composition (basic and acidic residues).

This sequence belongs to the TatA/E family. In terms of assembly, the Tat system comprises two distinct complexes: a TatABC complex, containing multiple copies of TatA, TatB and TatC subunits, and a separate TatA complex, containing only TatA subunits. Substrates initially bind to the TatABC complex, which probably triggers association of the separate TatA complex to form the active translocon.

Its subcellular location is the cell inner membrane. Its function is as follows. Part of the twin-arginine translocation (Tat) system that transports large folded proteins containing a characteristic twin-arginine motif in their signal peptide across membranes. TatA could form the protein-conducting channel of the Tat system. The protein is Sec-independent protein translocase protein TatA of Sulfurovum sp. (strain NBC37-1).